Here is a 168-residue protein sequence, read N- to C-terminus: Plastocyanin, chloroplastic (168 aa).

A chloroplast-targeting transit peptide spans 1–70 (MASVAAAAVS…SSLLLVASAN (70 aa)). Residues 71–168 (AATVKMGGDD…AGMKGVVTVS (98 aa)) form the Plastocyanin-like domain. His108, Cys153, His156, and Met161 together coordinate Cu cation.

The protein belongs to the plastocyanin family. The cofactor is Cu(2+).

It is found in the plastid. The protein resides in the chloroplast thylakoid membrane. Functionally, participates in electron transfer between P700 and the cytochrome b6-f complex in photosystem I. This Physcomitrium patens (Spreading-leaved earth moss) protein is Plastocyanin, chloroplastic (PETE).